Here is a 150-residue protein sequence, read N- to C-terminus: Protein E6 (150 aa).

2 zinc fingers span residues 31 to 67 (CVFC…CACC) and 104 to 140 (CYLC…CFHC).

Belongs to the papillomaviridae E6 protein family. Forms homodimers. Interacts with ubiquitin-protein ligase UBE3A/E6-AP; this interaction stimulates UBE3A ubiquitin activity. Interacts with host TP53 and EP300; this interaction inhibits TP53 activity.

The protein resides in the host cytoplasm. It is found in the host nucleus. Its function is as follows. Plays a major role in the induction and maintenance of cellular transformation. E6 associates with host UBE3A/E6-AP ubiquitin-protein ligase and modulates its activity. Sequesters tumor suppressor TP53 in the host cytoplasm and modulates its activity by interacting with host EP300 that results in the reduction of TP53 acetylation and activation. In turn, apoptosis induced by DNA damage is inhibited. E6 also protects host keratinocytes from apoptosis by mediating the degradation of host BAK1. May also inhibit host immune response. The protein is Protein E6 of Human papillomavirus 13.